We begin with the raw amino-acid sequence, 83 residues long: Putative membrane protein insertion efficiency factor (83 aa).

The disordered stretch occupies residues Gly64–His83.

This sequence belongs to the UPF0161 family.

The protein localises to the cell membrane. Its function is as follows. Could be involved in insertion of integral membrane proteins into the membrane. In Staphylococcus epidermidis (strain ATCC 12228 / FDA PCI 1200), this protein is Putative membrane protein insertion efficiency factor.